The sequence spans 125 residues: Small ribosomal subunit protein uS13 (125 aa).

The segment at 92-125 is disordered; it reads RRSLPVRGQRTQTNARTRKGKRKTVAGKKKATKK. Residues 107–125 are compositionally biased toward basic residues; sequence RTRKGKRKTVAGKKKATKK.

This sequence belongs to the universal ribosomal protein uS13 family. As to quaternary structure, part of the 30S ribosomal subunit. Forms a loose heterodimer with protein S19. Forms two bridges to the 50S subunit in the 70S ribosome.

Functionally, located at the top of the head of the 30S subunit, it contacts several helices of the 16S rRNA. In the 70S ribosome it contacts the 23S rRNA (bridge B1a) and protein L5 of the 50S subunit (bridge B1b), connecting the 2 subunits; these bridges are implicated in subunit movement. Contacts the tRNAs in the A and P-sites. This Chlorobium limicola (strain DSM 245 / NBRC 103803 / 6330) protein is Small ribosomal subunit protein uS13.